Reading from the N-terminus, the 239-residue chain is Lactate utilization protein A 1 (239 aa).

This sequence belongs to the LutA/YkgE family.

Its function is as follows. Is involved in L-lactate degradation and allows cells to grow with lactate as the sole carbon source. The chain is Lactate utilization protein A 1 from Bacillus anthracis (strain A0248).